A 302-amino-acid polypeptide reads, in one-letter code: Mitochondrial glycine transporter (302 aa).

Solcar repeat units lie at residues 22-112 (HPVF…LKHH), 119-203 (PKPL…AKKL), and 213-297 (FSPV…MMEK). The next 6 membrane-spanning stretches (helical) occupy residues 28 to 53 (FVCGSLSGTCSTLLFQPLDLVKTRLQ), 87 to 113 (GVSPSFLRCIPGVGLYFSTLYTLKHHF), 125 to 150 (VMLGAGSRTVAAVCMLPFTVVKTRYE), 178 to 201 (GLTATLMRDAPFSGIYLMFYTRAK), 217 to 243 (LNFGCGIVAGILASVATQPADVIKTHI), and 272 to 290 (GGLPRALRRTLMAAMAWTV).

It belongs to the mitochondrial carrier (TC 2.A.29) family. SLC25A38 subfamily.

It localises to the mitochondrion inner membrane. It carries out the reaction glycine(in) = glycine(out). Mitochondrial glycine transporter that imports glycine into the mitochondrial matrix. Plays an important role in providing glycine for the first enzymatic step in heme biosynthesis, the condensation of glycine with succinyl-CoA to produce 5-aminolevulinate (ALA) in the mitochondrial matrix. Required during erythropoiesis. Functionally, may play a role as pro-apoptotic protein that induces caspase-dependent apoptosis. The sequence is that of Mitochondrial glycine transporter from Xenopus tropicalis (Western clawed frog).